The chain runs to 394 residues: MSLAVRGINRNAENAAPMGKAITDGTRRPVLGEISNFANKAVQVKKNTTLKAQAVKTAKPASQQQTLPTAALHKRAPVLPVIADPPQVVSVSTDVAIKEEELCQAFSDALLAVEDIDEGDADMPQLCSEYVKDIYVYLRNLEVQQCIRPRYMQGYEINERMRALLVDWLIQVHSRFQLLQETLYMTVAILDRFLQVQPVSRRKLQLVGVTAMLVASKYEEMYAPEVGDFVYITDNAFTKAQIREMEMLILRDLNFQLGRPLPLHFLRRASKAGSADAEKHTLAKYLMELTLMDYDMLHYHPSEIAAAALCLSQLVLDGQKWSATQQHYSTYNEDHLKPIMQHMAKNVVRVNEGLTKHMAIKNKYASSRLMRISLLPQLKAAVIKDLAAPLLPQS.

This sequence belongs to the cyclin family. Cyclin AB subfamily. As to quaternary structure, interacts with the CDK1 protein kinase to form a serine/threonine kinase holoenzyme complex also known as maturation promoting factor (MPF). The cyclin subunit imparts substrate specificity to the complex.

Functionally, essential for the control of the cell cycle at the G2/M (mitosis) transition. The protein is G2/mitotic-specific cyclin-B2 (ccnb2) of Anguilla japonica (Japanese eel).